We begin with the raw amino-acid sequence, 563 residues long: Developmental regulatory protein wetA (563 aa).

2 stretches are compositionally biased toward polar residues: residues 54–69 and 160–175; these read EQSPIISTSKQQTHPS and HKQSFSPSLTRPSQFQ. Disordered regions lie at residues 54-81, 112-176, 272-318, 334-356, 430-494, and 516-538; these read EQSPIISTSKQQTHPSPQWAKDFWSLPP, ASST…QFQK, SNNS…PDLQ, PQRQPSYQQVVASPPPQQPIQNT, PQLH…SPKG, and GVAPSGSSKTKARREQEARDRRR. Low complexity predominate over residues 272-305; it reads SNNSTVTSSPPSADDIFPSPHSSDPQSMSSWHSD. The span at 430–441 shows a compositional bias: polar residues; sequence PQLHPQSRSPSL.

This sequence belongs to the wetA family.

In terms of biological role, brlA, abaA and wetA are pivotal regulators of conidiophore development and conidium maturation. They act individually and together to regulate their own expression and that of numerous other sporulation-specific genes. The sequence is that of Developmental regulatory protein wetA from Aspergillus oryzae (strain ATCC 42149 / RIB 40) (Yellow koji mold).